The following is a 63-amino-acid chain: DNA-directed RNA polymerase 7 kDa subunit (63 aa).

It belongs to the poxviridae DNA-directed RNA polymerase 7 kDa subunit family. In terms of assembly, the DNA-dependent RNA polymerase (vRNAP) consists of eight subunits encoded by early viral genes and termed according to their apparent molecular masses Rpo147, Rpo132, Rpo35, Rpo30, Rpo22, Rpo19, Rpo18, and Rpo7. The same holoenzyme, with the addition of the transcription-specificity factor RAP94, is used for early gene expression.

It localises to the virion. It catalyses the reaction RNA(n) + a ribonucleoside 5'-triphosphate = RNA(n+1) + diphosphate. Its function is as follows. Part of the DNA-dependent RNA polymerase which catalyzes the transcription of viral DNA into RNA using the four ribonucleoside triphosphates as substrates. Responsible for the transcription of early, intermediate and late genes. DNA-dependent RNA polymerase associates with the early transcription factor (ETF), itself composed of OPG118 and OPG134, thereby allowing the early genes transcription. Late transcription, and probably also intermediate transcription, require newly synthesized RNA polymerase. The protein is DNA-directed RNA polymerase 7 kDa subunit (OPG090) of Homo sapiens (Human).